The following is a 448-amino-acid chain: Probable D-serine dehydratase (448 aa).

Lys119 bears the N6-(pyridoxal phosphate)lysine mark.

The protein belongs to the serine/threonine dehydratase family. DsdA subfamily. It depends on pyridoxal 5'-phosphate as a cofactor.

It catalyses the reaction D-serine = pyruvate + NH4(+). The sequence is that of Probable D-serine dehydratase from Pseudomonas aeruginosa (strain ATCC 15692 / DSM 22644 / CIP 104116 / JCM 14847 / LMG 12228 / 1C / PRS 101 / PAO1).